Reading from the N-terminus, the 71-residue chain is Large ribosomal subunit protein bL31 (71 aa).

4 residues coordinate Zn(2+): Cys16, Cys18, Cys37, and Cys40.

Belongs to the bacterial ribosomal protein bL31 family. Type A subfamily. Part of the 50S ribosomal subunit. Zn(2+) serves as cofactor.

In terms of biological role, binds the 23S rRNA. The sequence is that of Large ribosomal subunit protein bL31 from Pseudomonas aeruginosa (strain LESB58).